A 403-amino-acid polypeptide reads, in one-letter code: ATP phosphoribosyltransferase regulatory subunit (403 aa).

Belongs to the class-II aminoacyl-tRNA synthetase family. HisZ subfamily. As to quaternary structure, heteromultimer composed of HisG and HisZ subunits.

Its subcellular location is the cytoplasm. The protein operates within amino-acid biosynthesis; L-histidine biosynthesis; L-histidine from 5-phospho-alpha-D-ribose 1-diphosphate: step 1/9. Functionally, required for the first step of histidine biosynthesis. May allow the feedback regulation of ATP phosphoribosyltransferase activity by histidine. This Nostoc punctiforme (strain ATCC 29133 / PCC 73102) protein is ATP phosphoribosyltransferase regulatory subunit.